We begin with the raw amino-acid sequence, 716 residues long: Exocyst complex component 8 (716 aa).

Serine 15 carries the post-translational modification Phosphoserine. The segment at 129 to 150 (GFLPGPAGVPREGSGTGEEGKQ) is disordered. The PH domain maps to 173–273 (YLVYNGDLVE…WLEVLEETKR (101 aa)). Residues 275 to 284 (LSDKRRREQE) are compositionally biased toward basic and acidic residues. Residues 275-319 (LSDKRRREQEEAAAPRAPPPVTSKGSNPFEDEDDEELATPEAEEE) are disordered. The segment covering 303–319 (FEDEDDEELATPEAEEE) has biased composition (acidic residues). Threonine 313 bears the Phosphothreonine mark.

It belongs to the EXO84 family. As to quaternary structure, the exocyst complex is composed of EXOC1, EXOC2, EXOC3, EXOC4, EXOC5, EXOC6, EXOC7 and EXOC8. Interacts (via PH domain) with GTP-bound RALA and RALB. Interacts with SH3BP1; required for the localization of both SH3BP1 and the exocyst to the leading edge of migrating cells.

The protein localises to the cytoplasm. It localises to the perinuclear region. The protein resides in the cell projection. It is found in the growth cone. Component of the exocyst complex involved in the docking of exocytic vesicles with fusion sites on the plasma membrane. The sequence is that of Exocyst complex component 8 (Exoc8) from Mus musculus (Mouse).